The sequence spans 768 residues: Ribonucleoside-diphosphate reductase large chain (768 aa).

Residues 7–8 (SK) and 13–19 (EKLGIDL) contribute to the ATP site. GDP-binding residues include Thr196 and Ser211. Residues Cys212 and Cys437 are joined by a disulfide bond. Residues 220–222 (DSI), Lys237, and Arg250 each bind dTTP. Residue Asn420 participates in GDP binding. The active-site Proton acceptor is Asn420. Cys422 (cysteine radical intermediate) is an active-site residue. Glu424 is a binding site for GDP. Residue Glu424 is the Proton acceptor of the active site.

It belongs to the ribonucleoside diphosphate reductase large chain family. As to quaternary structure, heterodimer of a large and a small subunit.

The catalysed reaction is a 2'-deoxyribonucleoside 5'-diphosphate + [thioredoxin]-disulfide + H2O = a ribonucleoside 5'-diphosphate + [thioredoxin]-dithiol. Its activity is regulated as follows. Under complex allosteric control mediated by deoxynucleoside triphosphates and ATP binding to separate specificity and activation sites on the large subunit. The type of nucleotide bound at the specificity site determines substrate preference. It seems probable that ATP makes the enzyme reduce CDP and UDP, dGTP favors ADP reduction and dTTP favors GDP reduction. Stimulated by ATP and inhibited by dATP binding to the activity site. In terms of biological role, provides the precursors necessary for DNA synthesis. Catalyzes the biosynthesis of deoxyribonucleotides from the corresponding ribonucleotides. The polypeptide is Ribonucleoside-diphosphate reductase large chain (Encephalitozoon cuniculi (strain GB-M1) (Microsporidian parasite)).